Here is a 316-residue protein sequence, read N- to C-terminus: Spermidine synthase (316 aa).

The PABS domain occupies 25–262 (PGWFSEISPM…GVIGFMLCST (238 aa)). Residue Gln-56 participates in S-adenosyl 3-(methylsulfanyl)propylamine binding. A putrescine-binding site is contributed by Tyr-86. Residues Gln-87, Asp-111, Glu-131, 162 to 163 (DG), and Asp-181 contribute to the S-adenosyl 3-(methylsulfanyl)propylamine site. Catalysis depends on Asp-181, which acts as the Proton acceptor. Putrescine contacts are provided by residues 181–184 (DSSD) and Tyr-250.

This sequence belongs to the spermidine/spermine synthase family.

The enzyme catalyses S-adenosyl 3-(methylsulfanyl)propylamine + putrescine = S-methyl-5'-thioadenosine + spermidine + H(+). It participates in amine and polyamine biosynthesis; spermidine biosynthesis; spermidine from putrescine: step 1/1. This is Spermidine synthase from Coffea arabica (Arabian coffee).